Here is a 242-residue protein sequence, read N- to C-terminus: uncharacterized protein (242 aa).

One can recognise an HTH gntR-type domain in the interval 8-76 (TPLYIQLKQI…QGKGTFVKSP (69 aa)). The H-T-H motif DNA-binding region spans 36–55 (ENELCTKYNVSRITVRKAIL).

This is an uncharacterized protein from Bacillus subtilis (strain 168).